The chain runs to 166 residues: Cytochrome b (166 aa).

A run of 4 helical transmembrane segments spans residues 15 to 35 (FKDI…VLIN), 77 to 97 (LGGV…PFYN), 109 to 129 (INQI…WIGA), and 136 to 156 (YVLL…INPL).

Belongs to the cytochrome b family. As to quaternary structure, the main subunits of complex b-c1 are: cytochrome b, cytochrome c1 and the Rieske protein. It depends on heme as a cofactor.

It localises to the mitochondrion inner membrane. Its function is as follows. Component of the ubiquinol-cytochrome c reductase complex (complex III or cytochrome b-c1 complex) that is part of the mitochondrial respiratory chain. The b-c1 complex mediates electron transfer from ubiquinol to cytochrome c. Contributes to the generation of a proton gradient across the mitochondrial membrane that is then used for ATP synthesis. In Drosophila subobscura (Fruit fly), this protein is Cytochrome b (mt:Cyt-b).